Reading from the N-terminus, the 355-residue chain is 3-dehydroquinate synthase (355 aa).

Residues 71-76 (EGEASK), 105-109 (GVVGD), 129-130 (TS), K142, and K151 contribute to the NAD(+) site. The Zn(2+) site is built by E184, H246, and H263.

It belongs to the sugar phosphate cyclases superfamily. Dehydroquinate synthase family. It depends on Co(2+) as a cofactor. Zn(2+) is required as a cofactor. Requires NAD(+) as cofactor.

The protein resides in the cytoplasm. It carries out the reaction 7-phospho-2-dehydro-3-deoxy-D-arabino-heptonate = 3-dehydroquinate + phosphate. It participates in metabolic intermediate biosynthesis; chorismate biosynthesis; chorismate from D-erythrose 4-phosphate and phosphoenolpyruvate: step 2/7. Functionally, catalyzes the conversion of 3-deoxy-D-arabino-heptulosonate 7-phosphate (DAHP) to dehydroquinate (DHQ). This Streptococcus sanguinis (strain SK36) protein is 3-dehydroquinate synthase.